The chain runs to 210 residues: uncharacterized protein (210 aa).

The CS domain occupies 2-91 (SRHPEVKWAQ…AEAKWWKKLV (90 aa)). Positions 165–210 (GMGGMGGMDEFEDESDDEEEVSKPQDAEKAAEAGKSQESDAKTETS) are disordered. The span at 173–184 (DEFEDESDDEEE) shows a compositional bias: acidic residues. Positions 185–210 (VSKPQDAEKAAEAGKSQESDAKTETS) are enriched in basic and acidic residues.

This is an uncharacterized protein from Oryza sativa subsp. indica (Rice).